Here is a 617-residue protein sequence, read N- to C-terminus: Bifunctional TH2 protein, mitochondrial (617 aa).

The transit peptide at 1-28 directs the protein to the mitochondrion; it reads MRFLFPTRLINNSSLGLLRSPHTTAPIR. Aspartate 107 is a substrate binding site. Cysteine 213 acts as the Nucleophile in catalysis. Tyrosine 217 and tyrosine 244 together coordinate substrate. Residue glutamate 286 is the Proton donor of the active site.

This sequence in the N-terminal section; belongs to the TenA family. In the C-terminal section; belongs to the HAD-like hydrolase superfamily.

It is found in the mitochondrion. Its subcellular location is the cytoplasm. The enzyme catalyses thiamine phosphate + H2O = thiamine + phosphate. It carries out the reaction 4-amino-5-aminomethyl-2-methylpyrimidine + H2O = 4-amino-5-hydroxymethyl-2-methylpyrimidine + NH4(+). May be involved in the salvage of thiamine breakdown products. This protein has a haloacid dehalogenase family domain fused to its TenA domain. Phosphatase with the highest activity against thiamine monophosphate (ThMP) and, with a lower activity, against thiamine diphosphate (ThDP), flavin mononucleotide, inorganic pyrophosphate, CTP and dATP. Has a thiamine salvage hydrolase activity, but only against 4-amino-5-aminomethyl-2-methylpyrimidine (amino-HMP) and not against N-formylamino-HMP, desthiothiamine, thiamine, ThMP, and ThDP. The polypeptide is Bifunctional TH2 protein, mitochondrial (Arabidopsis thaliana (Mouse-ear cress)).